Consider the following 1227-residue polypeptide: Sterol 3-beta-glucosyltransferase (1227 aa).

2 disordered regions span residues 1–76 (MLKG…AASP) and 104–189 (QLAT…MTSK). Residues 48–57 (KHKEAERRLT) show a composition bias toward basic and acidic residues. Residues 114-135 (AGADETEDEMDEAGDETGDDAD) are compositionally biased toward acidic residues. Positions 154–171 (ESRRSTLFELSIEPHPES) are enriched in basic and acidic residues. The span at 179–189 (TKNRRSRMTSK) shows a compositional bias: basic residues. The GRAM 1 domain maps to 188 to 229 (SKLRSKFNLDDDEELVREYPCWLLRDVLIQGHIYLTSRNLLF). The region spanning 239 to 342 (SARLTGNLSI…WSSALKKQVF (104 aa)) is the PH domain. Over residues 449–469 (DAAIASEAAADAAAADTASHS) the composition is skewed to low complexity. Disordered stretches follow at residues 449-484 (DAAI…RSTE) and 523-550 (TLKL…LESR). The GRAM 2 domain maps to 602 to 668 (KRFKAHFSLT…HDVENCYKEQ (67 aa)). UDP-alpha-D-glucose is bound by residues Ser786, Arg787, Asp789, Asn1060, Asn1088, Val1089, His1091, His1104, Ser1107, Gly1108, Thr1109, Asp1128, and Gln1129.

This sequence belongs to the glycosyltransferase 28 family.

The protein resides in the cytoplasm. Its subcellular location is the membrane. It catalyses the reaction a sterol + UDP-alpha-D-glucose = a sterol 3-beta-D-glucoside + UDP + H(+). The catalysed reaction is ergosterol + UDP-alpha-D-glucose = ergosteryl 3-beta-D-glucoside + UDP + H(+). Its function is as follows. Sterol glycosyltransferase responsible for the glycosylation of ergosterol to form ergosterol-glucoside. This Eremothecium gossypii (strain ATCC 10895 / CBS 109.51 / FGSC 9923 / NRRL Y-1056) (Yeast) protein is Sterol 3-beta-glucosyltransferase.